Consider the following 867-residue polypeptide: Coiled-coil domain-containing protein 178 (867 aa).

Coiled coils occupy residues 153–204 (DEKC…KIDS), 233–414 (WHLE…ENQY), 445–470 (ACTKLTEDNKKLEIDINKITVKTNES), and 662–696 (MIFYAKINELNEELKAKEEEKKSFDQTLEILKNKF).

This is Coiled-coil domain-containing protein 178 (CCDC178) from Homo sapiens (Human).